We begin with the raw amino-acid sequence, 316 residues long: Glycerol-3-phosphate dehydrogenase [NAD(P)+] (316 aa).

Positions 14, 15, 35, and 109 each coordinate NADPH. Residues K109 and G137 each coordinate sn-glycerol 3-phosphate. An NADPH-binding site is contributed by A141. 5 residues coordinate sn-glycerol 3-phosphate: K192, D248, S258, R259, and N260. Residue K192 is the Proton acceptor of the active site. R259 contributes to the NADPH binding site. The NADPH site is built by L283 and E285.

The protein belongs to the NAD-dependent glycerol-3-phosphate dehydrogenase family.

It is found in the cytoplasm. The enzyme catalyses sn-glycerol 3-phosphate + NAD(+) = dihydroxyacetone phosphate + NADH + H(+). It catalyses the reaction sn-glycerol 3-phosphate + NADP(+) = dihydroxyacetone phosphate + NADPH + H(+). Its pathway is membrane lipid metabolism; glycerophospholipid metabolism. In terms of biological role, catalyzes the reduction of the glycolytic intermediate dihydroxyacetone phosphate (DHAP) to sn-glycerol 3-phosphate (G3P), the key precursor for phospholipid synthesis. This is Glycerol-3-phosphate dehydrogenase [NAD(P)+] from Rickettsia prowazekii (strain Madrid E).